The primary structure comprises 124 residues: MARLVGVDLPRDKRIEIALTYIYGIGRTRAQQVLEATGVNPDLRVHQLGDEELVKLRDEIEANFKIEGDLRREVQADIRRKIEIGSYQGRRHRQGLPVRGQRTKTNARTRKGPKRTVAGKKKAK.

Residues 89 to 124 (GRRHRQGLPVRGQRTKTNARTRKGPKRTVAGKKKAK) form a disordered region. Residues 101 to 124 (QRTKTNARTRKGPKRTVAGKKKAK) show a composition bias toward basic residues.

The protein belongs to the universal ribosomal protein uS13 family. In terms of assembly, part of the 30S ribosomal subunit. Forms a loose heterodimer with protein S19. Forms two bridges to the 50S subunit in the 70S ribosome.

In terms of biological role, located at the top of the head of the 30S subunit, it contacts several helices of the 16S rRNA. In the 70S ribosome it contacts the 23S rRNA (bridge B1a) and protein L5 of the 50S subunit (bridge B1b), connecting the 2 subunits; these bridges are implicated in subunit movement. Contacts the tRNAs in the A and P-sites. The polypeptide is Small ribosomal subunit protein uS13 (Nocardioides sp. (strain ATCC BAA-499 / JS614)).